Reading from the N-terminus, the 372-residue chain is tRNA-specific 2-thiouridylase MnmA (372 aa).

ATP contacts are provided by residues 16-23 (GMSGGVDS) and Met42. Positions 102-104 (NPD) are interaction with target base in tRNA. Catalysis depends on Cys107, which acts as the Nucleophile. A disulfide bridge links Cys107 with Cys205. Gly132 is a binding site for ATP. The interval 155 to 157 (KDQ) is interaction with tRNA. Cys205 functions as the Cysteine persulfide intermediate in the catalytic mechanism. An interaction with tRNA region spans residues 317 to 318 (RY).

It belongs to the MnmA/TRMU family.

It is found in the cytoplasm. The enzyme catalyses S-sulfanyl-L-cysteinyl-[protein] + uridine(34) in tRNA + AH2 + ATP = 2-thiouridine(34) in tRNA + L-cysteinyl-[protein] + A + AMP + diphosphate + H(+). Its function is as follows. Catalyzes the 2-thiolation of uridine at the wobble position (U34) of tRNA, leading to the formation of s(2)U34. This chain is tRNA-specific 2-thiouridylase MnmA, found in Shewanella sp. (strain MR-7).